A 389-amino-acid polypeptide reads, in one-letter code: Nicotinate phosphoribosyltransferase (389 aa).

H216 carries the post-translational modification Phosphohistidine; by autocatalysis.

It belongs to the NAPRTase family. In terms of processing, transiently phosphorylated on a His residue during the reaction cycle. Phosphorylation strongly increases the affinity for substrates and increases the rate of nicotinate D-ribonucleotide production. Dephosphorylation regenerates the low-affinity form of the enzyme, leading to product release.

It catalyses the reaction nicotinate + 5-phospho-alpha-D-ribose 1-diphosphate + ATP + H2O = nicotinate beta-D-ribonucleotide + ADP + phosphate + diphosphate. Its pathway is cofactor biosynthesis; NAD(+) biosynthesis; nicotinate D-ribonucleotide from nicotinate: step 1/1. Catalyzes the synthesis of beta-nicotinate D-ribonucleotide from nicotinate and 5-phospho-D-ribose 1-phosphate at the expense of ATP. The sequence is that of Nicotinate phosphoribosyltransferase from Ralstonia pickettii (strain 12J).